The chain runs to 355 residues: Guanine nucleotide-binding protein alpha-2 subunit (355 aa).

Positions Met-1 to Leu-20 are disordered. The 323-residue stretch at Lys-33–Leu-355 folds into the G-alpha domain. Residues Lys-36–Thr-49 are G1 motif. Positions 44, 45, 46, 47, 48, 49, 151, 176, 182, 204, 270, 271, 273, and 328 each coordinate GTP. Ser-48 contributes to the Mg(2+) binding site. The tract at residues Asp-174–Thr-182 is G2 motif. Thr-182 is a Mg(2+) binding site. Residues Tyr-197–Arg-206 are G3 motif. Residues Ile-266 to Asp-273 are G4 motif. A G5 motif region spans residues Thr-326–Thr-331.

It belongs to the G-alpha family. G(q) subfamily. In terms of assembly, g proteins are composed of 3 units; alpha, beta and gamma. The alpha chain contains the guanine nucleotide binding site. Requires Mg(2+) as cofactor.

Its function is as follows. Guanine nucleotide-binding proteins (G proteins) are involved as modulators or transducers in various transmembrane signaling systems. The polypeptide is Guanine nucleotide-binding protein alpha-2 subunit (gna-2) (Neurospora crassa (strain ATCC 24698 / 74-OR23-1A / CBS 708.71 / DSM 1257 / FGSC 987)).